Reading from the N-terminus, the 395-residue chain is S-adenosylmethionine synthase (395 aa).

Position 16 (His16) interacts with ATP. Asp18 is a binding site for Mg(2+). Residue Glu44 coordinates K(+). Positions 57 and 100 each coordinate L-methionine. Residues 100–110 are flexible loop; the sequence is QSPDIAQGVDD. Residues 174 to 176, 241 to 242, Asp250, 256 to 257, Ala273, and Lys277 each bind ATP; these read DAK, RF, and RK. Asp250 contributes to the L-methionine binding site. Position 281 (Lys281) interacts with L-methionine.

Belongs to the AdoMet synthase family. In terms of assembly, homotetramer; dimer of dimers. Mg(2+) serves as cofactor. The cofactor is K(+).

It is found in the cytoplasm. The enzyme catalyses L-methionine + ATP + H2O = S-adenosyl-L-methionine + phosphate + diphosphate. The protein operates within amino-acid biosynthesis; S-adenosyl-L-methionine biosynthesis; S-adenosyl-L-methionine from L-methionine: step 1/1. Catalyzes the formation of S-adenosylmethionine (AdoMet) from methionine and ATP. The overall synthetic reaction is composed of two sequential steps, AdoMet formation and the subsequent tripolyphosphate hydrolysis which occurs prior to release of AdoMet from the enzyme. The polypeptide is S-adenosylmethionine synthase (Levilactobacillus brevis (strain ATCC 367 / BCRC 12310 / CIP 105137 / JCM 1170 / LMG 11437 / NCIMB 947 / NCTC 947) (Lactobacillus brevis)).